The primary structure comprises 546 residues: Chaperonin GroEL (546 aa).

ATP is bound by residues 30-33, Lys-51, 87-91, Gly-415, 479-481, and Asp-495; these read TLGP, DGTTT, and NAA. The tract at residues 527-546 is disordered; sequence DESAAPAMPGGMGGMGDMGM. The span at 536 to 546 shows a compositional bias: gly residues; sequence GGMGGMGDMGM.

The protein belongs to the chaperonin (HSP60) family. As to quaternary structure, forms a cylinder of 14 subunits composed of two heptameric rings stacked back-to-back. Interacts with the co-chaperonin GroES.

The protein localises to the cytoplasm. The enzyme catalyses ATP + H2O + a folded polypeptide = ADP + phosphate + an unfolded polypeptide.. In terms of biological role, together with its co-chaperonin GroES, plays an essential role in assisting protein folding. The GroEL-GroES system forms a nano-cage that allows encapsulation of the non-native substrate proteins and provides a physical environment optimized to promote and accelerate protein folding. The sequence is that of Chaperonin GroEL from Acidovorax ebreus (strain TPSY) (Diaphorobacter sp. (strain TPSY)).